Here is a 654-residue protein sequence, read N- to C-terminus: Sucrose:sucrose 1-fructosyltransferase (654 aa).

Positions 1 to 106 (MESSAVVPGT…VSEKASGAYS (106 aa)) are excised as a propeptide. An N-linked (GlcNAc...) asparagine glycan is attached at Asn32. The active site involves Asp136. Asn328, Asn457, Asn491, Asn506, and Asn625 each carry an N-linked (GlcNAc...) asparagine glycan.

This sequence belongs to the glycosyl hydrolase 32 family. As to quaternary structure, monomer. As to expression, accumulates at the base of growing leaves.

It localises to the vacuole. It carries out the reaction 2 sucrose = 1(F)-beta-D-fructosylsucrose + D-glucose. In terms of biological role, transferase involved in fructan biosynthesis that catalyzes the production of 1-kestose (fructose and nystose to a lower extent) from sucrose. Also exhibits some hydrolase activity toward 1-kestose, thus producing fructose and sucrose. A weak fructosyltransferase activity leads to the formation of nystose from 1-kestose. This is Sucrose:sucrose 1-fructosyltransferase (1-SST) from Festuca arundinacea (Tall fescue).